The primary structure comprises 312 residues: Olfactory receptor 51B2 (312 aa).

The Extracellular portion of the chain corresponds to 1–23 (MWPNITAAPFLLTGFPGLEAAHH). Asparagine 4 carries N-linked (GlcNAc...) asparagine glycosylation. A helical transmembrane segment spans residues 24–44 (WISIPFFAVYVCILLGNGMLL). At 45 to 52 (YLIKHDHS) the chain is on the cytoplasmic side. The chain crosses the membrane as a helical span at residues 53–73 (LHEPMYYFLTMLAGTDLMVTL). The Extracellular portion of the chain corresponds to 74-97 (TTMPTVMGILWVNHREISSVGCFL). A disulfide bridge connects residues cysteine 95 and cysteine 187. A helical transmembrane segment spans residues 98–118 (QAYFIHSLSVVESGSLLAMAY). Residues 119 to 137 (DCFIAIRNPLRYASILTNT) are Cytoplasmic-facing. Residues 138-158 (RVIALGVGVFLRGFVSILPVI) traverse the membrane as a helical segment. Residues 159 to 194 (LRLFSFSYCKSHVITRAFCLHQEIMRLACADITFNR) are Extracellular-facing. A helical transmembrane segment spans residues 195-215 (LYPVILISLTIFLDCLIILFS). The Cytoplasmic portion of the chain corresponds to 216–235 (YILILNTVIGIASGEERAKA). A helical membrane pass occupies residues 236-256 (LNTCISHISCVLIFYVTVMGL). Residues 257–271 (TFIYRFGKNVPEVVH) are Extracellular-facing. The chain crosses the membrane as a helical span at residues 272-292 (IIMSYIYFLFPPLMNPVIYSI). Topologically, residues 293-312 (KTKQIQYGIIRLLSKHRFSS) are cytoplasmic.

The protein belongs to the G-protein coupled receptor 1 family. Post-translationally, ubiquitinated by the CRL2(FEM1A) and CRL2(FEM1C) complexes, which recognize the -Lys-Xaa-Xaa-Arg C-degron at the C-terminus, leading to its degradation.

The protein resides in the cell membrane. Odorant receptor. This chain is Olfactory receptor 51B2 (OR51B2), found in Homo sapiens (Human).